A 438-amino-acid polypeptide reads, in one-letter code: Trigger factor (438 aa).

Residues 163–248 enclose the PPIase FKBP-type domain; that stretch reads GEIAVLDFAA…VHAVKERKLP (86 aa).

Belongs to the FKBP-type PPIase family. Tig subfamily.

The protein localises to the cytoplasm. The enzyme catalyses [protein]-peptidylproline (omega=180) = [protein]-peptidylproline (omega=0). Involved in protein export. Acts as a chaperone by maintaining the newly synthesized protein in an open conformation. Functions as a peptidyl-prolyl cis-trans isomerase. The protein is Trigger factor of Oleidesulfovibrio alaskensis (strain ATCC BAA-1058 / DSM 17464 / G20) (Desulfovibrio alaskensis).